We begin with the raw amino-acid sequence, 158 residues long: Mitotic-spindle organizing protein 2 (158 aa).

Ser34 carries the phosphoserine modification. The interval 81–158 (AGQRVASDSQ…PGRSPPRSGT (78 aa)) is disordered. Residues 110 to 119 (KGGGALGGGP) show a composition bias toward gly residues. Phosphoserine is present on Ser152.

The protein belongs to the MOZART2 family. As to quaternary structure, associates with the gamma-tubulin ring complex (gTuRC) consisting of TUBGCP2, TUBGCP3, TUBGCP4, TUBGCP5 and TUBGCP6 and gamma-tubulin TUBG1 or TUBG2; within the complex, interacts with TUBGCP2; the interaction plays a role in gTuRC activation.

The protein resides in the cytoplasm. Its subcellular location is the cytoskeleton. The protein localises to the microtubule organizing center. It is found in the centrosome. It localises to the spindle. In terms of biological role, required for the recruitment and the assembly of the gamma-tubulin ring complex (gTuRC) at the centrosome. The gTuRC regulates the minus-end nucleation of alpha-beta tubulin heterodimers that grow into microtubule protafilaments, a critical step in centrosome duplication and spindle formation. The protein is Mitotic-spindle organizing protein 2 (MZT2) of Bos taurus (Bovine).